A 144-amino-acid chain; its full sequence is MLMPKKVKYRKQQRGRMRGKAWRGSELSFGDYGLKVMECGYITDRQIEASRIAMTRFIKRGGKIWLRLFPDKPITKKPAETRMGKGKGAPDHWVAVVRPGKVLFEMEGVSPEMAQEAMRLAANKLPLKTRFVMRHDVKTTVAAK.

Belongs to the universal ribosomal protein uL16 family. As to quaternary structure, part of the 50S ribosomal subunit.

In terms of biological role, binds 23S rRNA and is also seen to make contacts with the A and possibly P site tRNAs. The polypeptide is Large ribosomal subunit protein uL16 (Acidobacterium capsulatum (strain ATCC 51196 / DSM 11244 / BCRC 80197 / JCM 7670 / NBRC 15755 / NCIMB 13165 / 161)).